Here is a 605-residue protein sequence, read N- to C-terminus: Threonine--tRNA ligase (605 aa).

The catalytic stretch occupies residues 195–497 (DHRKVGKELG…LIEEYAGDFP (303 aa)). Residues cysteine 294, histidine 345, and histidine 474 each coordinate Zn(2+).

It belongs to the class-II aminoacyl-tRNA synthetase family. As to quaternary structure, homodimer. The cofactor is Zn(2+).

It localises to the cytoplasm. It catalyses the reaction tRNA(Thr) + L-threonine + ATP = L-threonyl-tRNA(Thr) + AMP + diphosphate + H(+). Catalyzes the attachment of threonine to tRNA(Thr) in a two-step reaction: L-threonine is first activated by ATP to form Thr-AMP and then transferred to the acceptor end of tRNA(Thr). Also edits incorrectly charged L-seryl-tRNA(Thr). This is Threonine--tRNA ligase from Thermosynechococcus vestitus (strain NIES-2133 / IAM M-273 / BP-1).